The chain runs to 252 residues: Probable aquaporin TIP1-2 (252 aa).

2 helical membrane-spanning segments follow: residues 24 to 44 (VAEF…GMAF) and 57 to 77 (GLIA…AVGA). Residues 85–87 (NPA) carry the NPA 1 motif. Transmembrane regions (helical) follow at residues 115–137 (VVAC…SLSA), 144–164 (AVVF…ATAV), and 173–193 (VIAP…GGAF). The NPA 2 signature appears at 199 to 201 (NPA). Residues 220–240 (WLGPFVGAAIAALIYDIIFIG) form a helical membrane-spanning segment.

This sequence belongs to the MIP/aquaporin (TC 1.A.8) family. TIP (TC 1.A.8.10) subfamily. Expressed in leaves.

It is found in the vacuole membrane. Functionally, aquaporins facilitate the transport of water and small neutral solutes across cell membranes. May be involved in transport from the vacuolar compartment to the cytoplasm. This chain is Probable aquaporin TIP1-2 (TIP1-2), found in Oryza sativa subsp. japonica (Rice).